The primary structure comprises 103 residues: UPF0473 protein LVIS_1220 (103 aa).

It belongs to the UPF0473 family.

This is UPF0473 protein LVIS_1220 from Levilactobacillus brevis (strain ATCC 367 / BCRC 12310 / CIP 105137 / JCM 1170 / LMG 11437 / NCIMB 947 / NCTC 947) (Lactobacillus brevis).